Consider the following 777-residue polypeptide: 1,4-alpha-glucan branching enzyme GlgB (777 aa).

D408 (nucleophile) is an active-site residue. E461 functions as the Proton donor in the catalytic mechanism.

It belongs to the glycosyl hydrolase 13 family. GlgB subfamily. Monomer.

It catalyses the reaction Transfers a segment of a (1-&gt;4)-alpha-D-glucan chain to a primary hydroxy group in a similar glucan chain.. It participates in glycan biosynthesis; glycogen biosynthesis. Catalyzes the formation of the alpha-1,6-glucosidic linkages in glycogen by scission of a 1,4-alpha-linked oligosaccharide from growing alpha-1,4-glucan chains and the subsequent attachment of the oligosaccharide to the alpha-1,6 position. The protein is 1,4-alpha-glucan branching enzyme GlgB of Actinobacillus pleuropneumoniae serotype 5b (strain L20).